Here is a 218-residue protein sequence, read N- to C-terminus: Thiopurine S-methyltransferase (218 aa).

Residues W10, L45, E66, and R123 each coordinate S-adenosyl-L-methionine.

Belongs to the class I-like SAM-binding methyltransferase superfamily. TPMT family.

Its subcellular location is the cytoplasm. It catalyses the reaction S-adenosyl-L-methionine + a thiopurine = S-adenosyl-L-homocysteine + a thiopurine S-methylether.. Involved in the biological cycling of tellurium and selenium. Tellurium resistance (Ter) mechanism. This chain is Thiopurine S-methyltransferase, found in Pseudomonas syringae pv. pisi.